We begin with the raw amino-acid sequence, 511 residues long: MMKMRWLGAAIMLTLYASSSWAFSIDDVAKQAQSLAGKGYEAPKSNLPSVFRDMKYADYQQIQFNSDKAYWNNLKTPFKLEFYHQGMYFDTPVKINEVTATTVKRIKYSPDYFNFGNVQHDKDTVKDLGFAGFKVLYPINSKDKNDEIVSMLGASYFRVIGAGQVYGLSARGLAIDTALPSGEEFPRFREFWIERPKPTDKRLTVYALLDSPRATGAYRFVIIPGRDTVVDVQSKVYLRDKVGKLGVAPLTSMFLFGPNQPSPTTNYRPELHDSNGLSIHAGNGEWIWRPLNNPKHLAVSSYAMENPQGFGLLQRGREFSRFEDLDDRYDLRPSAWITPKGDWGKGKVELVEIPTNDETNDNIVAYWTPDQLPEPGKEMNFKYTLTFSRDEDKLHAPDNAWVLQTRRSTGDVKQSNLIRQPDGTIAFVVDFVGADMKKLPPDTPVAAQTSIGDNGEIVDSNVRYNPVTKGWRLMLRVKVKDAKKTTEMRAALVNADQTLSETWSYQLPANE.

The N-terminal stretch at 1–22 (MMKMRWLGAAIMLTLYASSSWA) is a signal peptide.

It belongs to the OpgD/OpgG family.

The protein resides in the periplasm. Its pathway is glycan metabolism; osmoregulated periplasmic glucan (OPG) biosynthesis. Functionally, involved in the biosynthesis of osmoregulated periplasmic glucans (OPGs). The protein is Glucans biosynthesis protein G of Salmonella enteritidis PT4 (strain P125109).